The chain runs to 942 residues: E3 ubiquitin-protein ligase HACE1 (942 aa).

ANK repeat units follow at residues 23–55 (LPDDNETAVYTLMPMVMADQHRSVSELLSNSKF), 64–93 (VKRSLLHIAANCGSVECLVLLLKKGANPNY), 97–126 (SGCTPLHLAARNGQKKCMSKLLEYSADVNI), 130–159 (EGLTAIHWLAVNGRTELLHDLVQHVSNVDV), 163–192 (MGQTALHVACQNGHKTTVQCLLDSGADINR), 196–226 (SGATPLYFACSHGQRDTAQILLMRGAKYLPD), and 228–253 (NGITPLDLCVQGGYGETCEVLIQYHP). The tract at residues 428–459 (KGPDHQDATPTPSFAAAGTESRKELSTDTGDS) is disordered. Positions 447 to 459 (ESRKELSTDTGDS) are enriched in basic and acidic residues. One can recognise an HECT domain in the interval 607–942 (NCAKLKQGIA…HCGSYGYTMA (336 aa)). Catalysis depends on C909, which acts as the Glycyl thioester intermediate.

The protein localises to the golgi apparatus. Its subcellular location is the golgi stack membrane. It is found in the cytoplasm. It localises to the endoplasmic reticulum. The enzyme catalyses S-ubiquitinyl-[E2 ubiquitin-conjugating enzyme]-L-cysteine + [acceptor protein]-L-lysine = [E2 ubiquitin-conjugating enzyme]-L-cysteine + N(6)-ubiquitinyl-[acceptor protein]-L-lysine.. It functions in the pathway protein modification; protein ubiquitination. In terms of biological role, E3 ubiquitin-protein ligase involved in Golgi membrane fusion and regulation of small GTPases. Acts as a regulator of Golgi membrane dynamics during the cell cycle: recruited to Golgi membrane by Rab proteins and regulates postmitotic Golgi membrane fusion. Acts by mediating ubiquitination during mitotic Golgi disassembly, ubiquitination serving as a signal for Golgi reassembly later, after cell division. This is E3 ubiquitin-protein ligase HACE1 (HACE1) from Gallus gallus (Chicken).